We begin with the raw amino-acid sequence, 366 residues long: tRNA/tmRNA (uracil-C(5))-methyltransferase (366 aa).

Positions 190, 218, 223, 239, and 299 each coordinate S-adenosyl-L-methionine. The active-site Nucleophile is Cys-324. The Proton acceptor role is filled by Glu-358.

Belongs to the class I-like SAM-binding methyltransferase superfamily. RNA M5U methyltransferase family. TrmA subfamily.

It catalyses the reaction uridine(54) in tRNA + S-adenosyl-L-methionine = 5-methyluridine(54) in tRNA + S-adenosyl-L-homocysteine + H(+). It carries out the reaction uridine(341) in tmRNA + S-adenosyl-L-methionine = 5-methyluridine(341) in tmRNA + S-adenosyl-L-homocysteine + H(+). Dual-specificity methyltransferase that catalyzes the formation of 5-methyluridine at position 54 (m5U54) in all tRNAs, and that of position 341 (m5U341) in tmRNA (transfer-mRNA). The polypeptide is tRNA/tmRNA (uracil-C(5))-methyltransferase (Escherichia coli O157:H7).